The chain runs to 99 residues: Small ribosomal subunit protein uS19 (99 aa).

Residues 76–99 (PTRSFRGHAGGGKAEKGGSAPRKK) are disordered.

The protein belongs to the universal ribosomal protein uS19 family.

In terms of biological role, protein S19 forms a complex with S13 that binds strongly to the 16S ribosomal RNA. This is Small ribosomal subunit protein uS19 from Pelodictyon phaeoclathratiforme (strain DSM 5477 / BU-1).